The primary structure comprises 241 residues: ATP synthase subunit a (241 aa).

5 helical membrane passes run 23 to 43, 83 to 103, 113 to 133, 188 to 208, and 209 to 229; these read VSFTNSSLLMLLTVGLAAAFF, YFPYILTLFVFVFLGNMLGML, IAVTAALAVGIFIAVTIIGFA, VLAGFVIMLGVVGGVVPFAVV, and LGVTVLEFFIAALQAYVFTIL.

Belongs to the ATPase A chain family. F-type ATPases have 2 components, CF(1) - the catalytic core - and CF(0) - the membrane proton channel. CF(1) has five subunits: alpha(3), beta(3), gamma(1), delta(1), epsilon(1). CF(0) has four main subunits: a, b, b' and c.

Its subcellular location is the cell inner membrane. Its function is as follows. Key component of the proton channel; it plays a direct role in the translocation of protons across the membrane. The chain is ATP synthase subunit a from Rhodospirillum rubrum (strain ATCC 11170 / ATH 1.1.1 / DSM 467 / LMG 4362 / NCIMB 8255 / S1).